Reading from the N-terminus, the 158-residue chain is SsrA-binding protein (158 aa).

A disordered region spans residues 135–158; the sequence is DKRKTLKDRDWERDKQRGFKKDLD. The span at 141–158 shows a compositional bias: basic and acidic residues; it reads KDRDWERDKQRGFKKDLD.

It belongs to the SmpB family.

The protein resides in the cytoplasm. Required for rescue of stalled ribosomes mediated by trans-translation. Binds to transfer-messenger RNA (tmRNA), required for stable association of tmRNA with ribosomes. tmRNA and SmpB together mimic tRNA shape, replacing the anticodon stem-loop with SmpB. tmRNA is encoded by the ssrA gene; the 2 termini fold to resemble tRNA(Ala) and it encodes a 'tag peptide', a short internal open reading frame. During trans-translation Ala-aminoacylated tmRNA acts like a tRNA, entering the A-site of stalled ribosomes, displacing the stalled mRNA. The ribosome then switches to translate the ORF on the tmRNA; the nascent peptide is terminated with the 'tag peptide' encoded by the tmRNA and targeted for degradation. The ribosome is freed to recommence translation, which seems to be the essential function of trans-translation. This is SsrA-binding protein from Psychrobacter arcticus (strain DSM 17307 / VKM B-2377 / 273-4).